The sequence spans 160 residues: Nucleotide-binding protein MADE_1020535 (160 aa).

It belongs to the YajQ family.

Its function is as follows. Nucleotide-binding protein. The chain is Nucleotide-binding protein MADE_1020535 from Alteromonas mediterranea (strain DSM 17117 / CIP 110805 / LMG 28347 / Deep ecotype).